Consider the following 508-residue polypeptide: Phenylalanine--tRNA ligase alpha subunit (508 aa).

At A2 the chain carries N-acetylalanine. Phosphothreonine is present on T190. 2 positions are modified to phosphoserine: S193 and S301. The residue at position 311 (K311) is an N6-acetyllysine. Residues T329, 372–374 (QIE), and Y412 each bind L-phenylalanine. E414 is a Mg(2+) binding site. L-phenylalanine is bound at residue F438.

It belongs to the class-II aminoacyl-tRNA synthetase family. Phe-tRNA synthetase alpha subunit type 2 subfamily. In terms of assembly, heterotetramer; dimer of two heterodimers formed by FARSA and FARSB.

Its subcellular location is the cytoplasm. It catalyses the reaction tRNA(Phe) + L-phenylalanine + ATP = L-phenylalanyl-tRNA(Phe) + AMP + diphosphate + H(+). The polypeptide is Phenylalanine--tRNA ligase alpha subunit (FARSA) (Homo sapiens (Human)).